The chain runs to 449 residues: Exodeoxyribonuclease 7 large subunit (449 aa).

The protein belongs to the XseA family. As to quaternary structure, heterooligomer composed of large and small subunits.

The protein localises to the cytoplasm. It catalyses the reaction Exonucleolytic cleavage in either 5'- to 3'- or 3'- to 5'-direction to yield nucleoside 5'-phosphates.. Its function is as follows. Bidirectionally degrades single-stranded DNA into large acid-insoluble oligonucleotides, which are then degraded further into small acid-soluble oligonucleotides. In Latilactobacillus sakei subsp. sakei (strain 23K) (Lactobacillus sakei subsp. sakei), this protein is Exodeoxyribonuclease 7 large subunit.